The sequence spans 306 residues: Mediator of RNA polymerase II transcription subunit 30 (306 aa).

2 disordered regions span residues 1–22 (MSGQ…FNSP) and 51–148 (QQQM…STQA). The span at 51–128 (QQQMQSGGVQ…VSSAAQSATG (78 aa)) shows a compositional bias: low complexity.

Belongs to the Mediator complex subunit 30 family. In terms of assembly, component of the Mediator complex.

It localises to the nucleus. Functionally, component of the Mediator complex, a coactivator involved in the regulated transcription of nearly all RNA polymerase II-dependent genes. Mediator functions as a bridge to convey information from gene-specific regulatory proteins to the basal RNA polymerase II transcription machinery. Mediator is recruited to promoters by direct interactions with regulatory proteins and serves as a scaffold for the assembly of a functional preinitiation complex with RNA polymerase II and the general transcription factors. This is Mediator of RNA polymerase II transcription subunit 30 (MED30) from Aedes aegypti (Yellowfever mosquito).